A 355-amino-acid chain; its full sequence is UDP-N-acetylglucosamine--N-acetylmuramyl-(pentapeptide) pyrophosphoryl-undecaprenol N-acetylglucosamine transferase (355 aa).

UDP-N-acetyl-alpha-D-glucosamine-binding positions include 7-9, Asn119, Arg159, Ser187, Ile241, and Gln286; that span reads TGG.

Belongs to the glycosyltransferase 28 family. MurG subfamily.

The protein resides in the cell inner membrane. It catalyses the reaction di-trans,octa-cis-undecaprenyl diphospho-N-acetyl-alpha-D-muramoyl-L-alanyl-D-glutamyl-meso-2,6-diaminopimeloyl-D-alanyl-D-alanine + UDP-N-acetyl-alpha-D-glucosamine = di-trans,octa-cis-undecaprenyl diphospho-[N-acetyl-alpha-D-glucosaminyl-(1-&gt;4)]-N-acetyl-alpha-D-muramoyl-L-alanyl-D-glutamyl-meso-2,6-diaminopimeloyl-D-alanyl-D-alanine + UDP + H(+). Its pathway is cell wall biogenesis; peptidoglycan biosynthesis. Its function is as follows. Cell wall formation. Catalyzes the transfer of a GlcNAc subunit on undecaprenyl-pyrophosphoryl-MurNAc-pentapeptide (lipid intermediate I) to form undecaprenyl-pyrophosphoryl-MurNAc-(pentapeptide)GlcNAc (lipid intermediate II). This Nitrosomonas eutropha (strain DSM 101675 / C91 / Nm57) protein is UDP-N-acetylglucosamine--N-acetylmuramyl-(pentapeptide) pyrophosphoryl-undecaprenol N-acetylglucosamine transferase.